The chain runs to 421 residues: C2H2 type master regulator of conidiophore development brlA (421 aa).

The segment covering 228-242 has biased composition (polar residues); that stretch reads THSPTTPLRSCSIGT. Residues 228–247 are disordered; it reads THSPTTPLRSCSIGTASGPD. 2 consecutive C2H2-type zinc fingers follow at residues 309-333 and 339-364; these read FKCK…MKSH and HVCW…TKTH. A compositionally biased stretch (basic residues) spans 361–370; it reads TKTHSKRGGR. The tract at residues 361–421 is disordered; the sequence is TKTHSKRGGR…REYSVDGLDD (61 aa).

It is found in the nucleus. BrlA, abaA and wetA are pivotal regulators of conidiophore development and conidium maturation. They act individually and together to regulate their own expression and that of numerous other sporulation-specific genes. Binds promoters of target genes at brlA response elements (BREs) containing the conserved sequence 5'-(C/A)(A/G)AGGG(G/A)-3'. This is C2H2 type master regulator of conidiophore development brlA from Aspergillus parasiticus (strain ATCC 56775 / NRRL 5862 / SRRC 143 / SU-1).